A 679-amino-acid chain; its full sequence is Methionine--tRNA ligase (679 aa).

The short motif at 12–22 is the 'HIGH' region element; that stretch reads PYANGPIHIGH. Zn(2+) contacts are provided by Cys143, Cys146, Cys156, and Cys158. Positions 328–332 match the 'KMSKS' region motif; that stretch reads KMSKS. Lys331 lines the ATP pocket. Residues 537 to 564 form a disordered region; it reads MMEESKDEAAQETGAAATNPFNDSDQPL. In terms of domain architecture, tRNA-binding spans 577–679; it reads DFMKVDLRVA…EGALPGQRVH (103 aa).

It belongs to the class-I aminoacyl-tRNA synthetase family. MetG type 1 subfamily. Homodimer. Zn(2+) is required as a cofactor.

Its subcellular location is the cytoplasm. The enzyme catalyses tRNA(Met) + L-methionine + ATP = L-methionyl-tRNA(Met) + AMP + diphosphate. In terms of biological role, is required not only for elongation of protein synthesis but also for the initiation of all mRNA translation through initiator tRNA(fMet) aminoacylation. The protein is Methionine--tRNA ligase of Rhodopirellula baltica (strain DSM 10527 / NCIMB 13988 / SH1).